The primary structure comprises 453 residues: Venom prothrombin activator notecarin-D2 (453 aa).

The N-terminal stretch at 1–20 (MAPQLLLCLILTFLWSLPEA) is a signal peptide. A propeptide spanning residues 21–40 (ESNVFLKSKVANRFLQRTKR) is cleaved from the precursor. In terms of domain architecture, Gla spans 41–86 (SNSLFEEIRPGNIERECIEEKCSKEEAREVFEDNEKTETFWNVYVD). Residues Glu46, Glu47, Glu54, Glu56, Glu59, Glu60, Glu65, Glu66, Glu69, Glu72, and Glu75 each carry the 4-carboxyglutamate modification. A disulfide bridge connects residues Cys57 and Cys62. An EGF-like 1; calcium-binding domain is found at 86–122 (DGDQCSSNPCHYRGTCKDGIGSYTCTCLPNYEGKNCE). 11 cysteine pairs are disulfide-bonded: Cys90–Cys101, Cys95–Cys110, Cys112–Cys121, Cys129–Cys140, Cys136–Cys149, Cys151–Cys164, Cys172–Cys326, Cys216–Cys221, Cys236–Cys252, Cys374–Cys388, and Cys399–Cys427. The O-linked (Hex...) serine glycan is linked to Ser92. In terms of domain architecture, EGF-like 2 spans 129 to 164 (CRAFNGNCWHFCKRVQSETQCSCAESYLLGVDGHSC). The propeptide at 182-209 (REASLPDFVQSQKATVLKKSDNPSPDIR) is activation peptide. In terms of domain architecture, Peptidase S1 spans 210 to 451 (IVNGMDCKLG…FIPWIKKIMS (242 aa)). Residue His251 is the Charge relay system of the active site. N-linked (GlcNAc...) asparagine glycosylation is present at Asn254. Asp306 functions as the Charge relay system in the catalytic mechanism. The active-site Charge relay system is the Ser403.

The protein belongs to the peptidase S1 family. Snake venom subfamily. As to quaternary structure, heterodimer of a light chain and a heavy chain; disulfide-linked. Gamma-carboxyglutamate residues are formed by vitamin K dependent carboxylation. These residues are essential for the binding of calcium. As to expression, expressed by the venom gland.

Its subcellular location is the secreted. The enzyme catalyses Selective cleavage of Arg-|-Thr and then Arg-|-Ile bonds in prothrombin to form thrombin.. Its function is as follows. Snake prothrombin activator that attacks the hemostatic system of prey. This protein is functionally similar to blood coagulation factor Xa. In Notechis scutatus scutatus (Mainland tiger snake), this protein is Venom prothrombin activator notecarin-D2.